The chain runs to 176 residues: Ribosome rescue factor SmrB (176 aa).

One can recognise a Smr domain in the interval 98 to 173 (LDLHGLTQMQ…GTAAILLLVE (76 aa)).

This sequence belongs to the SmrB family. Associates with collided ribosomes, but not with correctly translating polysomes.

In terms of biological role, acts as a ribosome collision sensor. Detects stalled/collided disomes (pairs of ribosomes where the leading ribosome is stalled and a second ribosome has collided with it) and endonucleolytically cleaves mRNA at the 5' boundary of the stalled ribosome. Stalled/collided disomes form a new interface (primarily via the 30S subunits) that binds SmrB. Cleaved mRNA becomes available for tmRNA ligation, leading to ribosomal subunit dissociation and rescue of stalled ribosomes. In Serratia proteamaculans (strain 568), this protein is Ribosome rescue factor SmrB.